We begin with the raw amino-acid sequence, 120 residues long: Large ribosomal subunit protein uL18 (120 aa).

This sequence belongs to the universal ribosomal protein uL18 family. As to quaternary structure, part of the 50S ribosomal subunit; part of the 5S rRNA/L5/L18/L25 subcomplex. Contacts the 5S and 23S rRNAs.

In terms of biological role, this is one of the proteins that bind and probably mediate the attachment of the 5S RNA into the large ribosomal subunit, where it forms part of the central protuberance. In Rhizobium johnstonii (strain DSM 114642 / LMG 32736 / 3841) (Rhizobium leguminosarum bv. viciae), this protein is Large ribosomal subunit protein uL18.